The following is a 262-amino-acid chain: 1-(5-phosphoribosyl)-5-[(5-phosphoribosylamino)methylideneamino] imidazole-4-carboxamide isomerase (262 aa).

Asp8 (proton acceptor) is an active-site residue. The Proton donor role is filled by Asp129. Residues Lys243–Gly262 are disordered.

The protein belongs to the HisA/HisF family.

Its subcellular location is the cytoplasm. It catalyses the reaction 1-(5-phospho-beta-D-ribosyl)-5-[(5-phospho-beta-D-ribosylamino)methylideneamino]imidazole-4-carboxamide = 5-[(5-phospho-1-deoxy-D-ribulos-1-ylimino)methylamino]-1-(5-phospho-beta-D-ribosyl)imidazole-4-carboxamide. It participates in amino-acid biosynthesis; L-histidine biosynthesis; L-histidine from 5-phospho-alpha-D-ribose 1-diphosphate: step 4/9. This chain is 1-(5-phosphoribosyl)-5-[(5-phosphoribosylamino)methylideneamino] imidazole-4-carboxamide isomerase, found in Desulforudis audaxviator (strain MP104C).